We begin with the raw amino-acid sequence, 147 residues long: UPAR/Ly6 domain-containing protein CG9338 (147 aa).

An N-terminal signal peptide occupies residues 1–23 (MVSSVKMILALTVLATVACTGYA). The Extracellular portion of the chain corresponds to 24-126 (IKCYQCDSLT…VCTEDECNGT (103 aa)). Disulfide bonds link Cys26-Cys72, Cys29-Cys37, Cys51-Cys89, Cys101-Cys115, and Cys118-Cys123. The N-linked (GlcNAc...) asparagine glycan is linked to Asn68. A lipid anchor (GPI-anchor amidated asparagine) is attached at Asn124. The propeptide at 125–147 (GTSSLAPIAGVILLFFGLARLLA) is removed in mature form. The helical transmembrane segment at 127-147 (SSLAPIAGVILLFFGLARLLA) threads the bilayer.

Belongs to the quiver family.

It localises to the cell membrane. In terms of biological role, may be involved in regulating neuron excitability. The sequence is that of UPAR/Ly6 domain-containing protein CG9338 from Drosophila melanogaster (Fruit fly).